An 874-amino-acid polypeptide reads, in one-letter code: Alanine--tRNA ligase (874 aa).

Residues H562, H566, C664, and H668 each contribute to the Zn(2+) site.

Belongs to the class-II aminoacyl-tRNA synthetase family. Zn(2+) serves as cofactor.

Its subcellular location is the cytoplasm. The catalysed reaction is tRNA(Ala) + L-alanine + ATP = L-alanyl-tRNA(Ala) + AMP + diphosphate. In terms of biological role, catalyzes the attachment of alanine to tRNA(Ala) in a two-step reaction: alanine is first activated by ATP to form Ala-AMP and then transferred to the acceptor end of tRNA(Ala). Also edits incorrectly charged Ser-tRNA(Ala) and Gly-tRNA(Ala) via its editing domain. The protein is Alanine--tRNA ligase of Shewanella sp. (strain ANA-3).